The primary structure comprises 355 residues: Epoxyqueuosine reductase (355 aa).

Asp-143 acts as the Proton donor in catalysis. A 4Fe-4S ferredoxin-type domain is found at Leu-185–Arg-217. [4Fe-4S] cluster contacts are provided by Cys-197, Cys-200, Cys-203, Cys-207, Cys-223, Cys-250, Cys-253, and Cys-257.

It belongs to the QueG family. In terms of assembly, monomer. Cob(II)alamin serves as cofactor. Requires [4Fe-4S] cluster as cofactor.

The protein localises to the cytoplasm. The enzyme catalyses epoxyqueuosine(34) in tRNA + AH2 = queuosine(34) in tRNA + A + H2O. Its pathway is tRNA modification; tRNA-queuosine biosynthesis. Functionally, catalyzes the conversion of epoxyqueuosine (oQ) to queuosine (Q), which is a hypermodified base found in the wobble positions of tRNA(Asp), tRNA(Asn), tRNA(His) and tRNA(Tyr). The polypeptide is Epoxyqueuosine reductase (Xanthomonas campestris pv. campestris (strain ATCC 33913 / DSM 3586 / NCPPB 528 / LMG 568 / P 25)).